Reading from the N-terminus, the 427-residue chain is MGLQLRALLGAFGRWTLRLGPRPSCSPRMAGNAEPPPAGAACPQDRRSCSGRAGGDRVWEDGEHPAKKLKSGGDEERREKPPKRKIVLLMAYSGKGYHGMQRNVGSSQFKTIEDDLVSALVRSGCIPENHGEDMRKMSFQRCARTDKGVSAAGQVVSLKVWLIDDILEKINSHLPSHIRILGLKRVTGGFNSKNRCDARTYCYLLPTFAFAHKDRDVQDETYRLSAETLQQVNRLLACYKGTHNFHNFTSQKGPQDPSACRYILEMYCEEPFVREGLEFAVIRVKGQSFMMHQIRKMVGLVVAIVKGYAPESVLERSWGTEKVDVPKAPGLGLVLERVHFEKYNQRFGNDGLHEPLDWAQEEGKVAAFKEEHIYPTIIGTERDERSMAQWLSTLPIHNFSATALTAGGTGAKVPSPLEGSEGDGDTD.

Residues 20–83 form a disordered region; that stretch reads GPRPSCSPRM…DEERREKPPK (64 aa). Positions 44 to 79 are enriched in basic and acidic residues; the sequence is QDRRSCSGRAGGDRVWEDGEHPAKKLKSGGDEERRE. The active-site Nucleophile is Asp146. The disordered stretch occupies residues 407–427; it reads GGTGAKVPSPLEGSEGDGDTD. Phosphoserine is present on residues Ser415 and Ser420. Thr426 carries the phosphothreonine modification.

It belongs to the tRNA pseudouridine synthase TruA family. As to quaternary structure, monomer. Forms a complex with RARG and the SRA1 RNA in the nucleus. As to expression, widely expressed. High levels of expression found in brain and skeletal muscle.

The protein localises to the mitochondrion. It is found in the nucleus. It localises to the cytoplasm. The enzyme catalyses a uridine in tRNA = a pseudouridine in tRNA. It catalyses the reaction uridine(38/39/40) in tRNA = pseudouridine(38/39/40) in tRNA. It carries out the reaction a uridine in mRNA = a pseudouridine in mRNA. Functionally, pseudouridylate synthase that catalyzes pseudouridylation of tRNAs and mRNAs. Acts on positions 27/28 in the anticodon stem and also positions 34 and 36 in the anticodon of an intron containing tRNA. Also catalyzes pseudouridylation of mRNAs: mediates pseudouridylation of mRNAs with the consensus sequence 5'-UGUAG-3'. Acts as a regulator of pre-mRNA splicing by mediating pseudouridylation of pre-mRNAs at locations associated with alternatively spliced regions. Pseudouridylation of pre-mRNAs near splice sites directly regulates mRNA splicing and mRNA 3'-end processing. Involved in regulation of nuclear receptor activity through pseudouridylation of SRA1 mRNA. The sequence is that of Pseudouridylate synthase 1 homolog from Homo sapiens (Human).